The sequence spans 161 residues: Large ribosomal subunit protein uL10 (161 aa).

This sequence belongs to the universal ribosomal protein uL10 family. As to quaternary structure, part of the ribosomal stalk of the 50S ribosomal subunit. The N-terminus interacts with L11 and the large rRNA to form the base of the stalk. The C-terminus forms an elongated spine to which L12 dimers bind in a sequential fashion forming a multimeric L10(L12)X complex.

Forms part of the ribosomal stalk, playing a central role in the interaction of the ribosome with GTP-bound translation factors. The protein is Large ribosomal subunit protein uL10 of Malacoplasma penetrans (strain HF-2) (Mycoplasma penetrans).